The primary structure comprises 733 residues: Ribosomal protein S6 kinase alpha-2 (733 aa).

The Protein kinase 1 domain occupies 59–318 (FELLKVLGQG…VEEIKRHPFF (260 aa)). ATP is bound by residues 65–73 (LGQGSYGKV) and Lys-91. Asp-184 acts as the Proton acceptor in catalysis. Phosphoserine; by PDPK1 is present on Ser-218. An AGC-kinase C-terminal domain is found at 319-388 (VTIDWNTLYR…VASSLIQEPS (70 aa)). Ser-377 is subject to Phosphoserine. Positions 415–672 (YEIKEDIGVG…AMQVLKHPWV (258 aa)) constitute a Protein kinase 2 domain. ATP contacts are provided by residues 421–429 (IGVGSYSVC) and Lys-444. The Proton acceptor role is filled by Asp-532.

Belongs to the protein kinase superfamily. AGC Ser/Thr protein kinase family. S6 kinase subfamily. In terms of assembly, forms a complex with either MAPK1/ERK2 or MAPK3/ERK1 in quiescent cells. Transiently dissociates following mitogenic stimulation. Interacts with FBXO5; cooperate to induce the metaphase arrest of early blastomeres; increases and stabilizes interaction of FBXO5 with CDC20. Requires Mg(2+) as cofactor. Post-translationally, activated by phosphorylation at Ser-218 by PDPK1. Autophosphorylated on Ser-377, as part of the activation process. May be phosphorylated at Thr-356 and Ser-360 by MAPK1/ERK2 and MAPK3/ERK1. N-terminal myristoylation results in an activated kinase in the absence of added growth factors. Widely expressed with higher expression in lung, skeletal muscle, brain, uterus, ovary, thyroid and prostate.

It localises to the nucleus. Its subcellular location is the cytoplasm. It carries out the reaction L-seryl-[protein] + ATP = O-phospho-L-seryl-[protein] + ADP + H(+). The catalysed reaction is L-threonyl-[protein] + ATP = O-phospho-L-threonyl-[protein] + ADP + H(+). Its activity is regulated as follows. Upon extracellular signal or mitogen stimulation, phosphorylated at Thr-570 in the C-terminal kinase domain (CTKD) by MAPK1/ERK2 and MAPK3/ERK1. The activated CTKD then autophosphorylates Ser-377, allowing binding of PDPK1, which in turn phosphorylates Ser-218 in the N-terminal kinase domain (NTDK) leading to the full activation of the protein and subsequent phosphorylation of the substrates by the NTKD. Its function is as follows. Serine/threonine-protein kinase that acts downstream of ERK (MAPK1/ERK2 and MAPK3/ERK1) signaling and mediates mitogenic and stress-induced activation of transcription factors, regulates translation, and mediates cellular proliferation, survival, and differentiation. May function as tumor suppressor in epithelial ovarian cancer cells. The chain is Ribosomal protein S6 kinase alpha-2 (RPS6KA2) from Homo sapiens (Human).